The chain runs to 463 residues: Female germline-specific tumor suppressor gld-1 (463 aa).

The segment covering 1–10 has biased composition (polar residues); it reads MPSCTTPTYG. The tract at residues 1–76 is disordered; that stretch reads MPSCTTPTYG…RAPPPARLTL (76 aa). The span at 11-31 shows a compositional bias: low complexity; it reads VSTQLESQSSESPSRSSVMTP. The segment at 135–205 is qua1 domain; involved in homodimerization; sequence PTATEPIEVE…PEPAGDMISI (71 aa). A KH domain is found at 208–260; that stretch reads KIYVPKNEYPDYNFVGRILGPRGMTAKQLEQDTGCKIMVRGKGSMRDKSKESA. The tract at residues 305 to 336 is qua2 domain; involved in RNA binding; the sequence is APEGTDELKRKQLMELAIINGTYRPMKSPNPA. Residues 443–463 form a disordered region; sequence NTNVSPSGASPSASSVNNTSF. Over residues 447–457 the composition is skewed to low complexity; sequence SPSGASPSASS.

In terms of assembly, homodimer. Phosphorylated by cdk-2 which may negatively regulate its expression in distal mitotic germline cells. In terms of processing, undergoes proteasomal degradation in proximal oocytes following mating. In terms of tissue distribution, expressed in proximal and distal oocytes in female worms but is eliminated from proximal oocytes following mating.

Functionally, RNA-binding protein which recognizes the 5'-UACUCAU-3' RNA consensus sequence. Binds sequences in both the 5'coding and the 3'-UTR region of rme-2 mRNA. Binds sequences in the 3'-UTR region of cye-1 mRNA. Binds to cyb-2.1, cyb-2.2 and cyb-3 mRNA. Binds sequences in the 3'-UTR region of tra-2 mRNA. Binds to the 3' UTR of Notch receptor homolog glp-1, thereby repressing glp-1 translation in the embryo. Binding to the glp-1 3' UTR is inhibited by pos-1 binding to an overlapping binding site in the glp-1 3' UTR. Germ line-specific tumor suppressor essential for oogenesis. Controls the spatial pattern of translation of multiple oogenesis specific mRNAs (e.g. yolk receptor rme-2) by repression of translation during early meiotic prophase (leptotene to pachytene) and then derepression of translation during diplotene/ diakinesis, following its degradation. Also functions to promote the male sexual fate in the hermaphrodite germline but not the male germline. Represses translation of the vacuolar ATPase component vha-13 in the distal gonad. Functions redundantly with gld-2 to promote the initiation of meiotic development and/or inhibit stem cell proliferation. By regulating cye-1 expression, prevents entry into mitosis in meiotic germline cells. The sequence is that of Female germline-specific tumor suppressor gld-1 (gld-1) from Caenorhabditis elegans.